A 131-amino-acid chain; its full sequence is MKKHGVLNSEIAAVLASLGHTDTIVIADCGLPIPDGVKRIDLAVEIGKPSFLDVLQVVADDMAIEKVTLAEEVIINNAEVNKEIEQKLIEPAFEYVSHEQFKAHTKKAKAIIRTGEATPYANVILHAGVIF.

Catalysis depends on H20, which acts as the Proton donor. Substrate contacts are provided by residues D28, H98, and 120-122 (YAN).

The protein belongs to the RbsD / FucU family. RbsD subfamily. In terms of assembly, homodecamer.

It localises to the cytoplasm. The enzyme catalyses beta-D-ribopyranose = beta-D-ribofuranose. It participates in carbohydrate metabolism; D-ribose degradation; D-ribose 5-phosphate from beta-D-ribopyranose: step 1/2. Its function is as follows. Catalyzes the interconversion of beta-pyran and beta-furan forms of D-ribose. This is D-ribose pyranase from Bacillus cereus (strain B4264).